The sequence spans 393 residues: Elongation factor Tu (393 aa).

Positions lysine 10–valine 203 constitute a tr-type G domain. The tract at residues glycine 19–threonine 26 is G1. GTP is bound at residue glycine 19–threonine 26. Threonine 26 provides a ligand contact to Mg(2+). Residues glycine 60–serine 64 form a G2 region. Residues aspartate 81 to glycine 84 are G3. Residues aspartate 81–histidine 85 and asparagine 136–aspartate 139 contribute to the GTP site. The tract at residues asparagine 136 to aspartate 139 is G4. The tract at residues serine 173–leucine 175 is G5.

Belongs to the TRAFAC class translation factor GTPase superfamily. Classic translation factor GTPase family. EF-Tu/EF-1A subfamily. Monomer.

It is found in the cytoplasm. It catalyses the reaction GTP + H2O = GDP + phosphate + H(+). Its function is as follows. GTP hydrolase that promotes the GTP-dependent binding of aminoacyl-tRNA to the A-site of ribosomes during protein biosynthesis. The polypeptide is Elongation factor Tu (Chlorobaculum parvum (strain DSM 263 / NCIMB 8327) (Chlorobium vibrioforme subsp. thiosulfatophilum)).